The primary structure comprises 59 residues: Large ribosomal subunit protein bL32 (59 aa).

Positions 1-59 (MAVQQNKKSPSKRGMHRAHDFLTAPVIAIEPSTGEAHRRHHISPNGFYRGRKVVKGKDE) are disordered. The segment covering 49-59 (RGRKVVKGKDE) has biased composition (basic residues).

The protein belongs to the bacterial ribosomal protein bL32 family.

This chain is Large ribosomal subunit protein bL32, found in Laribacter hongkongensis (strain HLHK9).